A 362-amino-acid polypeptide reads, in one-letter code: Fructose-bisphosphate aldolase (362 aa).

S65 serves as a coordination point for D-glyceraldehyde 3-phosphate. Catalysis depends on D112, which acts as the Proton donor. H113, D147, E177, and H229 together coordinate Zn(2+). Residue G230 participates in dihydroxyacetone phosphate binding. H268 serves as a coordination point for Zn(2+). Dihydroxyacetone phosphate contacts are provided by residues 269–271 and 290–293; these read GGS and NVDT.

It belongs to the class II fructose-bisphosphate aldolase family. Homodimer. It depends on Zn(2+) as a cofactor.

It catalyses the reaction beta-D-fructose 1,6-bisphosphate = D-glyceraldehyde 3-phosphate + dihydroxyacetone phosphate. The protein operates within carbohydrate degradation; glycolysis; D-glyceraldehyde 3-phosphate and glycerone phosphate from D-glucose: step 4/4. In terms of biological role, catalyzes the aldol condensation of dihydroxyacetone phosphate (DHAP or glycerone-phosphate) with glyceraldehyde 3-phosphate (G3P) to form fructose 1,6-bisphosphate (FBP) in gluconeogenesis and the reverse reaction in glycolysis. This chain is Fructose-bisphosphate aldolase (fbaA), found in Aspergillus oryzae (strain ATCC 42149 / RIB 40) (Yellow koji mold).